Reading from the N-terminus, the 506-residue chain is Hippocampus abundant transcript-like protein 1 (506 aa).

The tract at residues 1 to 25 (MSVEPPPELEEKAASEPEAGAMPEK) is disordered. Residues 1–49 (MSVEPPPELEEKAASEPEAGAMPEKRAGAQAAGSTWLQGFGRPSVYHAA) are Extracellular-facing. The helical transmembrane segment at 50–70 (IVIFLEFFAWGLLTTPMLTVL) threads the bilayer. The Cytoplasmic portion of the chain corresponds to 71–82 (HETFSQHTFLMN). Residues 83–103 (GLIQGVKGLLSFLSAPLIGAL) form a helical membrane-spanning segment. Residues 104–111 (SDVWGRKP) are Extracellular-facing. The chain crosses the membrane as a helical span at residues 112–132 (FLLGTVFFTCFPIPLMRISPW). Residues 133 to 134 (WY) are Cytoplasmic-facing. A helical membrane pass occupies residues 135 to 155 (FAMISVSGVFSVTFSVIFAYV). The Extracellular portion of the chain corresponds to 156-168 (ADVTQEHERSTAY). The helical transmembrane segment at 169-189 (GWVSATFAASLVSSPAIGAYL) threads the bilayer. The Cytoplasmic segment spans residues 190-196 (SASYGDS). The helical transmembrane segment at 197–217 (LVVLVATVVALLDICFILVAV) threads the bilayer. Topologically, residues 218–255 (PESLPEKMRPVSWGAQISWKQADPFASLKKVGKDSTVL) are extracellular. Residues 256 to 276 (LICITVFLSYLPEAGQYSSFF) traverse the membrane as a helical segment. Residues 277 to 281 (LYLRQ) are Cytoplasmic-facing. The chain crosses the membrane as a helical span at residues 282-302 (VIGFGSVKIAAFIAMVGILSI). Residues 303–319 (VAQTAFLSILMRSLGNK) lie on the Extracellular side of the membrane. A helical transmembrane segment spans residues 320-340 (NTVLLGLGFQMLQLAWYGFGS). Gln-341 is a topological domain (cytoplasmic). A helical membrane pass occupies residues 342–362 (AWMMWAAGTVAAMSSITFPAI). Over 363–387 (SALVSRNAESDQQGVAQGIITGIRG) the chain is Extracellular. Residues 388–408 (LCNGLGPALYGFIFYMFHVEL) form a helical membrane-spanning segment. The Cytoplasmic segment spans residues 409 to 428 (TELGPKLNSNNVPLQGAVIP). Residues 429-449 (GPPFLFGACIVLMSFLVALFI) traverse the membrane as a helical segment. Residues 450–506 (PEYSKASGVQKHSNSSSGSLTNTPERGSDEDIEPLLQDSSIWELSSFEEPGNQCTEL) are Extracellular-facing. Residues 457 to 481 (GVQKHSNSSSGSLTNTPERGSDEDI) form a disordered region. Residues 459–474 (QKHSNSSSGSLTNTPE) show a composition bias toward polar residues. Asn-463 is a glycosylation site (N-linked (GlcNAc...) asparagine).

The protein belongs to the major facilitator superfamily.

It is found in the membrane. The chain is Hippocampus abundant transcript-like protein 1 from Homo sapiens (Human).